A 660-amino-acid chain; its full sequence is Phosphatidylinositol-binding clathrin assembly protein (660 aa).

The residue at position 2 (Ser2) is an N-acetylserine. Positions 14–145 (QHSVTGSAVS…VSYRQVAFDF (132 aa)) constitute an ENTH domain. Residues Ser16 and Ser20 each carry the phosphoserine modification. Residues 221–294 (KYFDMKKNQC…LEGKKIKDST (74 aa)) are interaction with PIMREG. A Glycyl lysine isopeptide (Lys-Gly) (interchain with G-Cter in SUMO2) cross-link involves residue Lys238. Phosphoserine is present on residues Ser303 and Ser315. Residues 556–566 (GTTKNDVSWSQ) show a composition bias toward polar residues. The interval 556-580 (GTTKNDVSWSQPGEKKLTGGSNWQP) is disordered.

This sequence belongs to the PICALM/SNAP91 family. Binds to clathrin; involves primarily the C-terminal sequences, but the full-length protein is required for full binding capacity. Binds phosphatidylinositol 4,5- bisphosphate. Interacts with PIMREG; this interaction may change the subcellular location into the nucleus. Interacts with AP2A1 (via its alpha-appendage domain). Interacts (via N-terminus) with VAMP2; VAMP3; VAMP7 and VAMP8 (Via N-terminus). Interacts with LC3/MAP1LC3A. In terms of tissue distribution, skins and livers of 1-week-old mice.

The protein localises to the cell membrane. It is found in the membrane. Its subcellular location is the clathrin-coated pit. It localises to the golgi apparatus. The protein resides in the cytoplasmic vesicle. The protein localises to the clathrin-coated vesicle. It is found in the nucleus. In terms of biological role, cytoplasmic adapter protein that plays a critical role in clathrin-mediated endocytosis which is important in processes such as internalization of cell receptors, synaptic transmission or removal of apoptotic cells. Recruits AP-2 and attaches clathrin triskelions to the cytoplasmic side of plasma membrane leading to clathrin-coated vesicles (CCVs) assembly. Furthermore, regulates clathrin-coated vesicle size and maturation by directly sensing and driving membrane curvature. In addition to binding to clathrin, mediates the endocytosis of small R-SNARES (Soluble NSF Attachment Protein REceptors) between plasma membranes and endosomes including VAMP2, VAMP3, VAMP4, VAMP7 or VAMP8. In turn, PICALM-dependent SNARE endocytosis is required for the formation and maturation of autophagic precursors. Modulates thereby autophagy and the turnover of autophagy substrates such as MAPT/TAU or amyloid precursor protein cleaved C-terminal fragment (APP-CTF). The polypeptide is Phosphatidylinositol-binding clathrin assembly protein (Picalm) (Mus musculus (Mouse)).